The chain runs to 275 residues: Elongation factor Ts (275 aa).

Residue K36 forms an Isoglutamyl lysine isopeptide (Lys-Gln) (interchain with Q-Cter in protein Pup) linkage. The segment at 76-79 (TDFV) is involved in Mg(2+) ion dislocation from EF-Tu.

It belongs to the EF-Ts family.

It localises to the cytoplasm. In terms of biological role, associates with the EF-Tu.GDP complex and induces the exchange of GDP to GTP. It remains bound to the aminoacyl-tRNA.EF-Tu.GTP complex up to the GTP hydrolysis stage on the ribosome. The protein is Elongation factor Ts of Mycolicibacterium smegmatis (strain ATCC 700084 / mc(2)155) (Mycobacterium smegmatis).